The sequence spans 358 residues: uncharacterized protein (358 aa).

This is an uncharacterized protein from Klebsiella pneumoniae.